The sequence spans 524 residues: Cytochrome P450 4F3 (524 aa).

Residues 19–39 (WLLLLLAGASCLLAYILTPIY) traverse the membrane as a helical segment. A heme-binding site is contributed by C468.

Belongs to the cytochrome P450 family. Requires heme as cofactor. Highest level in polymorphonuclear leukocytes and dendritic cells. Detectable in lymph nodes, spleen, bone marrow and peripheral blood. Highly expressed in ovary. Very low level in liver, kidney, and smooth muscle. Expressed in neutrophils (at protein level).

Its subcellular location is the endoplasmic reticulum membrane. The protein localises to the microsome membrane. The catalysed reaction is leukotriene B4 + reduced [NADPH--hemoprotein reductase] + O2 = 18-hydroxy-leukotriene B4 + oxidized [NADPH--hemoprotein reductase] + H2O + H(+). It catalyses the reaction leukotriene B4 + reduced [NADPH--hemoprotein reductase] + O2 = 19-hydroxy-leukotriene B4 + oxidized [NADPH--hemoprotein reductase] + H2O + H(+). The protein operates within lipid metabolism; leukotriene B4 degradation. A cytochrome P450 monooxygenase involved in the metabolism of the pro-inflammatory lipid mediator leukotriene B4 (LTB4). Hydroxylates at the omega-1 and omega-2 positions LTB4. This oxidation step leads to LTB4 inactivation, which is postulated to be a crucial part of the resolution of inflammation. Mechanistically, uses molecular oxygen inserting one oxygen atom into a substrate, and reducing the second into a water molecule, with two electrons provided by NADPH via cytochrome P450 reductase (CPR; NADPH-ferrihemoprotein reductase). This chain is Cytochrome P450 4F3, found in Mus musculus (Mouse).